The primary structure comprises 139 residues: Nucleoside diphosphate kinase (139 aa).

Residues K10, F58, R86, T92, R103, and N113 each coordinate ATP. H116 (pros-phosphohistidine intermediate) is an active-site residue.

This sequence belongs to the NDK family. Homotetramer. Requires Mg(2+) as cofactor.

The protein resides in the cytoplasm. The enzyme catalyses a 2'-deoxyribonucleoside 5'-diphosphate + ATP = a 2'-deoxyribonucleoside 5'-triphosphate + ADP. The catalysed reaction is a ribonucleoside 5'-diphosphate + ATP = a ribonucleoside 5'-triphosphate + ADP. Its function is as follows. Major role in the synthesis of nucleoside triphosphates other than ATP. The ATP gamma phosphate is transferred to the NDP beta phosphate via a ping-pong mechanism, using a phosphorylated active-site intermediate. The polypeptide is Nucleoside diphosphate kinase (Nitratidesulfovibrio vulgaris (strain ATCC 29579 / DSM 644 / CCUG 34227 / NCIMB 8303 / VKM B-1760 / Hildenborough) (Desulfovibrio vulgaris)).